Reading from the N-terminus, the 453-residue chain is Protein LIAT1 (453 aa).

The tract at residues 1 to 152 (METRGPGLAV…HLPSDSSTVS (152 aa)) is disordered. The interval 82–103 (KRKVKKKKRKKKTKGSGKGDDK) is lysine-rich domain. Residues 83–96 (RKVKKKKRKKKTKG) are compositionally biased toward basic residues. Residues 106 to 117 (SQSLKSQPLSSS) show a composition bias toward low complexity. Basic and acidic residues predominate over residues 125–145 (CKERGPKPEHRQSKVEKKHLP). The interval 145-197 (PSDSSTVSLPDFAEIENLANRINESLRWDGILADPEAEKERIRIYKLNRRKRY) is interaction with ATE1. 20 consecutive repeat copies span residues 201 to 210 (ALKGFHPDPE), 211 to 220 (ALKGFHPDPD), 221 to 230 (ALKGFHPDPE), 231 to 240 (ALKGFHPDPE), 241 to 250 (ALKGFHPDPE), 251 to 260 (ALKGFHPDPE), 261 to 270 (ALKGIHPDPE), 271 to 280 (ALKGIHPDPE), 281 to 290 (ALKGFHPDPE), 291 to 300 (ALKGFHPDPE), 301 to 310 (ALKGFHTDPE), 311 to 320 (ALKGFHIDPE), 321 to 330 (ALKGFHPDPK), 331 to 340 (ALKGFHPDPK), 341 to 350 (ALKGFHTDPE), 351 to 360 (ALKGFHPDPK), 361 to 370 (ALKGFHPDPE), 371 to 380 (ALKGFHPDPE), 381 to 390 (ALKGFHPDPE), and 391 to 400 (ALKGFHTDPN). Residues 201 to 400 (ALKGFHPDPE…ALKGFHTDPN (200 aa)) form a 20 X 10 AA approximate tandem repeat of A-L-K-G-F-H-P-D-P-E region. 2 disordered regions span residues 225 to 306 (FHPD…KGFH) and 320 to 432 (EALK…CPNL). Residues 320–396 (EALKGFHPDP…PDPEALKGFH (77 aa)) show a composition bias toward basic and acidic residues.

Self-associates (via Lys-rich domain); targets LIAT1 to the nucleolus. Interacts with ATE1; it is not a substrate of ATE1, the interaction takes place in the cytoplasm and seems to increase ATE1 arginyltransferase activity. Interacts with JMJD6 and MRPS14. Post-translationally modified by JMJD6 lysyl-hydroxylase activity at its Lys-rich domain, which inhibits its self-association and nucleolar localization.

The protein localises to the nucleus. It is found in the nucleolus. Its subcellular location is the cytoplasm. In terms of biological role, participates in nucleolar liquid-liquid phase separation (LLPS) through its N-terminal intrinsically disordered region (IDR). May be involved in ATE1-mediated N-terminal arginylation. This Homo sapiens (Human) protein is Protein LIAT1.